We begin with the raw amino-acid sequence, 174 residues long: UPF0340 protein SAB1998c (174 aa).

This sequence belongs to the UPF0340 family.

The polypeptide is UPF0340 protein SAB1998c (Staphylococcus aureus (strain bovine RF122 / ET3-1)).